Here is a 466-residue protein sequence, read N- to C-terminus: Adenylosuccinate lyase (466 aa).

Substrate contacts are provided by residues 21-22 (RY), 97-99 (NHD), and 130-131 (TS). His-180 acts as the Proton donor/acceptor in catalysis. Residue Gln-259 coordinates substrate. The active-site Proton donor/acceptor is the Ser-307. 3 residues coordinate substrate: Arg-347, Ser-352, and Arg-356.

It belongs to the lyase 1 family. Adenylosuccinate lyase subfamily. As to quaternary structure, homotetramer. Residues from neighboring subunits contribute catalytic and substrate-binding residues to each active site.

The catalysed reaction is N(6)-(1,2-dicarboxyethyl)-AMP = fumarate + AMP. The enzyme catalyses (2S)-2-[5-amino-1-(5-phospho-beta-D-ribosyl)imidazole-4-carboxamido]succinate = 5-amino-1-(5-phospho-beta-D-ribosyl)imidazole-4-carboxamide + fumarate. It functions in the pathway purine metabolism; AMP biosynthesis via de novo pathway; AMP from IMP: step 2/2. Its pathway is purine metabolism; IMP biosynthesis via de novo pathway; 5-amino-1-(5-phospho-D-ribosyl)imidazole-4-carboxamide from 5-amino-1-(5-phospho-D-ribosyl)imidazole-4-carboxylate: step 2/2. This Dictyostelium discoideum (Social amoeba) protein is Adenylosuccinate lyase (purB).